The following is a 315-amino-acid chain: Cysteine synthase (315 aa).

Residues N8 and R35 each contribute to the hydrogen sulfide site. K42 is subject to N6-(pyridoxal phosphate)lysine. Residues N72 and 177–181 (GTGGT) contribute to the pyridoxal 5'-phosphate site. Position 269 (L269) interacts with hydrogen sulfide. A pyridoxal 5'-phosphate-binding site is contributed by S273.

Belongs to the cysteine synthase/cystathionine beta-synthase family. Homodimer. Requires pyridoxal 5'-phosphate as cofactor.

It carries out the reaction O-acetyl-L-serine + hydrogen sulfide = L-cysteine + acetate. The protein operates within amino-acid biosynthesis; L-cysteine biosynthesis; L-cysteine from L-serine: step 2/2. This is Cysteine synthase (cysK) from Buchnera aphidicola subsp. Acyrthosiphon pisum (strain APS) (Acyrthosiphon pisum symbiotic bacterium).